A 412-amino-acid chain; its full sequence is Divalent metal cation transporter MntH (412 aa).

Over 1–19 (MTNYRVESSSGRAARKTRL) the chain is Cytoplasmic. Residues 20–39 (ALMGPAFIAAIGYIDPGNFA) traverse the membrane as a helical segment. The Periplasmic portion of the chain corresponds to 40–51 (TNIQAGASFGYQ). The helical transmembrane segment at 52-71 (LLWVVVWANLMAMLIQILSA) threads the bilayer. Residues 72-95 (KLGIATGKNLAEQIRDHYPRPVVW) are Cytoplasmic-facing. Residues 96 to 118 (FYWVQAEIIAMATDLAEFIGAAI) traverse the membrane as a helical segment. Topologically, residues 119-125 (GFKLILG) are periplasmic. Residues 126-145 (VSLLQGAVLTGIATFLILML) form a helical membrane-spanning segment. Residues 146-155 (QRRGQKPLEK) are Cytoplasmic-facing. The chain crosses the membrane as a helical span at residues 156–175 (VIGGLLLFVAAAYIVELIFS). At 176–196 (QPNLAQLGKGMVIPSLPTSEA) the chain is on the periplasmic side. Residues 197 to 220 (VFLAAGVLGATIMPHVIYLHSSLT) traverse the membrane as a helical segment. Over 221–238 (QHLHGGSRQQRYSATKWD) the chain is Cytoplasmic. A helical transmembrane segment spans residues 239–258 (VAIAMTIAGFVNLAMMATAA). Over 259–276 (AAFHFSGHTGVADLDEAY) the chain is Periplasmic. The chain crosses the membrane as a helical span at residues 277–297 (LTLQPLLSHAAATVFGLSLVA). Residues 298–327 (AGLSSTVVGTLAGQVVMQGFIRFHIPLWVR) lie on the Cytoplasmic side of the membrane. A helical transmembrane segment spans residues 328–344 (RTVTMLPSFIVILMGLD). Residues 345 to 350 (PTRILV) lie on the Periplasmic side of the membrane. The helical transmembrane segment at 351–370 (MSQVLLSFGIALALVPLLIF) threads the bilayer. Residues 371-387 (TSDSKLMGDLVNSKRVK) lie on the Cytoplasmic side of the membrane. The chain crosses the membrane as a helical span at residues 388–406 (QTGWVIVVLVVALNIWLLV). Residues 407 to 412 (GTALGL) lie on the Periplasmic side of the membrane.

Belongs to the NRAMP family.

It is found in the cell inner membrane. H(+)-stimulated, divalent metal cation uptake system. This Escherichia coli O9:H4 (strain HS) protein is Divalent metal cation transporter MntH.